The following is a 235-amino-acid chain: Ubiquinone biosynthesis O-methyltransferase (235 aa).

S-adenosyl-L-methionine contacts are provided by R36, G56, D77, and M122.

Belongs to the methyltransferase superfamily. UbiG/COQ3 family.

The enzyme catalyses a 3-demethylubiquinol + S-adenosyl-L-methionine = a ubiquinol + S-adenosyl-L-homocysteine + H(+). It catalyses the reaction a 3-(all-trans-polyprenyl)benzene-1,2-diol + S-adenosyl-L-methionine = a 2-methoxy-6-(all-trans-polyprenyl)phenol + S-adenosyl-L-homocysteine + H(+). Its pathway is cofactor biosynthesis; ubiquinone biosynthesis. O-methyltransferase that catalyzes the 2 O-methylation steps in the ubiquinone biosynthetic pathway. The protein is Ubiquinone biosynthesis O-methyltransferase of Leptothrix cholodnii (strain ATCC 51168 / LMG 8142 / SP-6) (Leptothrix discophora (strain SP-6)).